The sequence spans 202 residues: Guanylyl cyclase-activating protein 1 (202 aa).

Gly-2 carries the N-myristoyl glycine lipid modification. Asn-3 is subject to Deamidated asparagine. EF-hand domains follow at residues 31-49 (SGQL…KNLS), 51-86 (SASQ…VLKG), 87-122 (KVEQ…IRTI), and 131-166 (SAEE…DQML). Ca(2+)-binding residues include Asp-64, Asn-66, Asp-68, Tyr-70, Glu-75, Asp-100, Asp-102, Asn-104, Cys-106, Glu-111, Asp-144, Asn-146, Asp-148, Glu-150, and Glu-155.

Homodimer. In the retina, expressed in rod photoreceptors (at protein level). Expressed in cone photoreceptors.

Its subcellular location is the membrane. The protein localises to the photoreceptor inner segment. The protein resides in the cell projection. It localises to the cilium. It is found in the photoreceptor outer segment. Stimulates retinal guanylyl cyclase when free calcium ions concentration is low and inhibits guanylyl cyclase when free calcium ions concentration is elevated. This Ca(2+)-sensitive regulation of retinal guanylyl cyclase is a key event in recovery of the dark state of rod photoreceptors following light exposure. May be involved in cone photoreceptor light response and recovery of response in bright light. In Mus musculus (Mouse), this protein is Guanylyl cyclase-activating protein 1 (Guca1a).